A 225-amino-acid polypeptide reads, in one-letter code: Vacuolar protein sorting-associated protein 2 homolog 1 (225 aa).

A coiled-coil region spans residues 13–54 (AELLRENKRMLDKSIREIERERQGLQTQEKKLINEIKKTAKQ).

Belongs to the SNF7 family. Component of the endosomal sorting required for transport complex III (ESCRT-III), composed at least of VPS2, VPS20, VPS24 and VPS32. Interacts with SKD1.

It is found in the endosome. Its function is as follows. Component of the ESCRT-III complex, which is required for multivesicular bodies (MVBs) formation and sorting of endosomal cargo proteins into MVBs. The ESCRT-III complex is probably involved in the concentration of MVB cargo. The chain is Vacuolar protein sorting-associated protein 2 homolog 1 (VPS2.1) from Arabidopsis thaliana (Mouse-ear cress).